The sequence spans 150 residues: Avidin-related protein 1 (150 aa).

The first 24 residues, 1–24 (MVHATSPLLLLLLLSLALVAPGLS), serve as a signal peptide directing secretion. In terms of domain architecture, Avidin-like spans 26-147 (RKCSLTGKWD…GNNDFTRQRT (122 aa)). A disulfide bridge links Cys-28 with Cys-105. Biotin contacts are provided by Asn-36 and Ser-40. Asn-54 carries an N-linked (GlcNAc...) asparagine glycan. Biotin is bound by residues Tyr-57, Thr-59, and Asp-63. Residues Asn-67 and Asn-93 are each glycosylated (N-linked (GlcNAc...) asparagine). 3 residues coordinate biotin: Ser-95, Ser-99, and Asn-140.

This sequence belongs to the avidin/streptavidin family. In terms of assembly, homotetramer. Post-translationally, glycosylated.

The protein localises to the secreted. Forms a strong non-covalent specific complex with biotin. This Gallus gallus (Chicken) protein is Avidin-related protein 1 (AVR1).